A 1115-amino-acid polypeptide reads, in one-letter code: DNA-directed RNA polymerase subunit beta (1115 aa).

Positions 1084–1115 (HEAGEGEDDEYFEEDEEAVDDEPMTFDDDDME) are disordered. Positions 1088–1115 (EGEDDEYFEEDEEAVDDEPMTFDDDDME) are enriched in acidic residues.

This sequence belongs to the RNA polymerase beta chain family. In terms of assembly, the RNAP catalytic core consists of 2 alpha, 1 beta, 1 beta' and 1 omega subunit. When a sigma factor is associated with the core the holoenzyme is formed, which can initiate transcription.

It catalyses the reaction RNA(n) + a ribonucleoside 5'-triphosphate = RNA(n+1) + diphosphate. DNA-dependent RNA polymerase catalyzes the transcription of DNA into RNA using the four ribonucleoside triphosphates as substrates. The chain is DNA-directed RNA polymerase subunit beta from Desulfitobacterium hafniense (strain DSM 10664 / DCB-2).